A 103-amino-acid polypeptide reads, in one-letter code: MYAVFQSGGKQHRVSEGQTLRLEKLDVETGATVEFDNVLMIANGEEITVGAPLVAGGKVTAEVVQHGRGDKVKIVKFRRRKHSRKQQGHRQWFTEVKITGISA.

This sequence belongs to the bacterial ribosomal protein bL21 family. As to quaternary structure, part of the 50S ribosomal subunit. Contacts protein L20.

Functionally, this protein binds to 23S rRNA in the presence of protein L20. In Aliivibrio fischeri (strain ATCC 700601 / ES114) (Vibrio fischeri), this protein is Large ribosomal subunit protein bL21.